Reading from the N-terminus, the 166-residue chain is Interferon gamma (166 aa).

The signal sequence occupies residues 1–23 (MNYTSYILAFQLCVILGSSGCYC). Q24 bears the Pyrrolidone carboxylic acid mark. N-linked (GlcNAc...) asparagine glycans are attached at residues N39 and N106.

The protein belongs to the type II (or gamma) interferon family. In terms of assembly, homodimer. Interacts with IFNGR1 (via extracellular domain); this interaction promotes IFNGR1 dimerization. Released primarily from activated T lymphocytes.

The protein localises to the secreted. Its function is as follows. Type II interferon produced by immune cells such as T-cells and NK cells that plays crucial roles in antimicrobial, antiviral, and antitumor responses by activating effector immune cells and enhancing antigen presentation. Primarily signals through the JAK-STAT pathway after interaction with its receptor IFNGR1 to affect gene regulation. Upon IFNG binding, IFNGR1 intracellular domain opens out to allow association of downstream signaling components JAK2, JAK1 and STAT1, leading to STAT1 activation, nuclear translocation and transcription of IFNG-regulated genes. Many of the induced genes are transcription factors such as IRF1 that are able to further drive regulation of a next wave of transcription. Plays a role in class I antigen presentation pathway by inducing a replacement of catalytic proteasome subunits with immunoproteasome subunits. In turn, increases the quantity, quality, and repertoire of peptides for class I MHC loading. Increases the efficiency of peptide generation also by inducing the expression of activator PA28 that associates with the proteasome and alters its proteolytic cleavage preference. Up-regulates as well MHC II complexes on the cell surface by promoting expression of several key molecules such as cathepsins B/CTSB, H/CTSH, and L/CTSL. Participates in the regulation of hematopoietic stem cells during development and under homeostatic conditions by affecting their development, quiescence, and differentiation. The sequence is that of Interferon gamma (IFNG) from Camelus bactrianus (Bactrian camel).